Reading from the N-terminus, the 62-residue chain is Large ribosomal subunit protein uL30 (62 aa).

This sequence belongs to the universal ribosomal protein uL30 family. Part of the 50S ribosomal subunit.

This Herpetosiphon aurantiacus (strain ATCC 23779 / DSM 785 / 114-95) protein is Large ribosomal subunit protein uL30.